Reading from the N-terminus, the 459-residue chain is Spermidine/putrescine import ATP-binding protein PotA (459 aa).

The ABC transporter domain maps to 15 to 334 (IELIDIVKQF…PRNIWVAKFI (320 aa)). 47 to 54 (GPSGSGKT) is an ATP binding site. The interval 115–203 (RVPKENVKKE…EEFKNKYFKR (89 aa)) is insert.

Belongs to the ABC transporter superfamily. Spermidine/putrescine importer (TC 3.A.1.11.1) family. The complex is composed of two ATP-binding proteins (PotA), two transmembrane proteins (PotB and PotC) and a solute-binding protein (PotD).

The protein localises to the cell membrane. It catalyses the reaction ATP + H2O + polyamine-[polyamine-binding protein]Side 1 = ADP + phosphate + polyamineSide 2 + [polyamine-binding protein]Side 1.. Part of the ABC transporter complex PotABCD involved in spermidine/putrescine import. Responsible for energy coupling to the transport system. This is Spermidine/putrescine import ATP-binding protein PotA from Mycoplasmopsis synoviae (strain 53) (Mycoplasma synoviae).